Consider the following 229-residue polypeptide: Ribonuclease 3 (229 aa).

Residues 7-132 (LRAFESRIGH…VIAAVYLDAG (126 aa)) form the RNase III domain. Position 45 (glutamate 45) interacts with Mg(2+). Residue aspartate 49 is part of the active site. The Mg(2+) site is built by aspartate 118 and glutamate 121. Glutamate 121 is a catalytic residue. One can recognise a DRBM domain in the interval 157–226 (DAKTALQEWA…ARALLARMEA (70 aa)).

The protein belongs to the ribonuclease III family. As to quaternary structure, homodimer. Mg(2+) serves as cofactor.

The protein localises to the cytoplasm. The enzyme catalyses Endonucleolytic cleavage to 5'-phosphomonoester.. Digests double-stranded RNA. Involved in the processing of primary rRNA transcript to yield the immediate precursors to the large and small rRNAs (23S and 16S). Processes some mRNAs, and tRNAs when they are encoded in the rRNA operon. Processes pre-crRNA and tracrRNA of type II CRISPR loci if present in the organism. The sequence is that of Ribonuclease 3 from Cereibacter sphaeroides (strain ATCC 17025 / ATH 2.4.3) (Rhodobacter sphaeroides).